A 644-amino-acid polypeptide reads, in one-letter code: DNA mismatch repair protein MutL (644 aa).

Disordered regions lie at residues 338-390 (RPNA…ERPA) and 416-445 (QPQEAAEEAAGTPAPPASSSPAMAETDDTQ). 2 stretches are compositionally biased toward low complexity: residues 349-366 (EATPSTDATTATAAEASA) and 416-427 (QPQEAAEEAAGT).

It belongs to the DNA mismatch repair MutL/HexB family.

Its function is as follows. This protein is involved in the repair of mismatches in DNA. It is required for dam-dependent methyl-directed DNA mismatch repair. May act as a 'molecular matchmaker', a protein that promotes the formation of a stable complex between two or more DNA-binding proteins in an ATP-dependent manner without itself being part of a final effector complex. This Chromohalobacter salexigens (strain ATCC BAA-138 / DSM 3043 / CIP 106854 / NCIMB 13768 / 1H11) protein is DNA mismatch repair protein MutL.